The primary structure comprises 211 residues: Sec-independent protein translocase protein TatB (211 aa).

A helical membrane pass occupies residues 1–21; that stretch reads MFDIGVGELTLIAVVALVVLG. Residues 175–211 are disordered; it reads AHLTSAPAPPVTVAPVDAGTSASPTPSEPTKIQEKQP. Residues 194–204 are compositionally biased toward polar residues; it reads TSASPTPSEPT.

It belongs to the TatB family. The Tat system comprises two distinct complexes: a TatABC complex, containing multiple copies of TatA, TatB and TatC subunits, and a separate TatA complex, containing only TatA subunits. Substrates initially bind to the TatABC complex, which probably triggers association of the separate TatA complex to form the active translocon.

It is found in the cell inner membrane. Part of the twin-arginine translocation (Tat) system that transports large folded proteins containing a characteristic twin-arginine motif in their signal peptide across membranes. Together with TatC, TatB is part of a receptor directly interacting with Tat signal peptides. TatB may form an oligomeric binding site that transiently accommodates folded Tat precursor proteins before their translocation. In Xanthomonas oryzae pv. oryzae (strain MAFF 311018), this protein is Sec-independent protein translocase protein TatB.